A 119-amino-acid polypeptide reads, in one-letter code: Beta-2-microglobulin (119 aa).

The N-terminal stretch at 1–20 (MARSVTVIFLVLVSLAVVLA) is a signal peptide. Positions 25–114 (PQIQVYSRHP…VTLKEPKTVT (90 aa)) constitute an Ig-like C1-type domain. An intrachain disulfide couples cysteine 45 to cysteine 100.

Belongs to the beta-2-microglobulin family. Heterodimer of an alpha chain and a beta chain. Beta-2-microglobulin is the beta-chain of major histocompatibility complex class I molecules. Forms a heterotrimer with MR1 and a metabolite antigen.

The protein localises to the secreted. Functionally, component of the class I major histocompatibility complex (MHC). Involved in the presentation of peptide antigens to the immune system. The sequence is that of Beta-2-microglobulin (B2m) from Rattus norvegicus (Rat).